Consider the following 258-residue polypeptide: Regulatory protein RecX (258 aa).

The protein belongs to the RecX family.

The protein localises to the cytoplasm. In terms of biological role, modulates RecA activity. The chain is Regulatory protein RecX from Streptococcus pneumoniae serotype 19F (strain G54).